A 349-amino-acid polypeptide reads, in one-letter code: Anthranilate phosphoribosyltransferase (349 aa).

Residues G81, 84–85, T89, 91–94, 109–117, and A121 contribute to the 5-phospho-alpha-D-ribose 1-diphosphate site; these read GD, NVST, and KHGNRAASS. An anthranilate-binding site is contributed by G81. Position 93 (S93) interacts with Mg(2+). Position 112 (N112) interacts with anthranilate. Residue R167 participates in anthranilate binding. D226 and E227 together coordinate Mg(2+).

This sequence belongs to the anthranilate phosphoribosyltransferase family. Homodimer. It depends on Mg(2+) as a cofactor.

It catalyses the reaction N-(5-phospho-beta-D-ribosyl)anthranilate + diphosphate = 5-phospho-alpha-D-ribose 1-diphosphate + anthranilate. Its pathway is amino-acid biosynthesis; L-tryptophan biosynthesis; L-tryptophan from chorismate: step 2/5. Catalyzes the transfer of the phosphoribosyl group of 5-phosphorylribose-1-pyrophosphate (PRPP) to anthranilate to yield N-(5'-phosphoribosyl)-anthranilate (PRA). The protein is Anthranilate phosphoribosyltransferase of Methylocella silvestris (strain DSM 15510 / CIP 108128 / LMG 27833 / NCIMB 13906 / BL2).